The primary structure comprises 209 residues: Imidazole glycerol phosphate synthase subunit HisH (209 aa).

Residues 1–205 (MIAIIDYGMG…QGVVEAWKSS (205 aa)) enclose the Glutamine amidotransferase type-1 domain. The active-site Nucleophile is the Cys-79. Residues His-180 and Glu-182 contribute to the active site.

Heterodimer of HisH and HisF.

Its subcellular location is the cytoplasm. It carries out the reaction 5-[(5-phospho-1-deoxy-D-ribulos-1-ylimino)methylamino]-1-(5-phospho-beta-D-ribosyl)imidazole-4-carboxamide + L-glutamine = D-erythro-1-(imidazol-4-yl)glycerol 3-phosphate + 5-amino-1-(5-phospho-beta-D-ribosyl)imidazole-4-carboxamide + L-glutamate + H(+). It catalyses the reaction L-glutamine + H2O = L-glutamate + NH4(+). Its pathway is amino-acid biosynthesis; L-histidine biosynthesis; L-histidine from 5-phospho-alpha-D-ribose 1-diphosphate: step 5/9. Its function is as follows. IGPS catalyzes the conversion of PRFAR and glutamine to IGP, AICAR and glutamate. The HisH subunit catalyzes the hydrolysis of glutamine to glutamate and ammonia as part of the synthesis of IGP and AICAR. The resulting ammonia molecule is channeled to the active site of HisF. The protein is Imidazole glycerol phosphate synthase subunit HisH of Bacillus cereus (strain G9842).